The primary structure comprises 185 residues: MYSTTDFRKGLKIEVEGIPYEIVDFQHFKPGKGGAMVRTKLRNILTGRMQDITFRSGEKVNKPDLETRDMQFLYRQDDDLIFMDMTTYEQLQMPVSTTDGKEGFLKDGQECRVLLYKGNPLDIDIPVSMVLAVVETEPGAKGDTVSNVTKPAKLETGLVVQVPIFVNEGDRIKVDTRSKEYLGRE.

It belongs to the elongation factor P family.

The protein resides in the cytoplasm. It functions in the pathway protein biosynthesis; polypeptide chain elongation. Its function is as follows. Involved in peptide bond synthesis. Stimulates efficient translation and peptide-bond synthesis on native or reconstituted 70S ribosomes in vitro. Probably functions indirectly by altering the affinity of the ribosome for aminoacyl-tRNA, thus increasing their reactivity as acceptors for peptidyl transferase. This chain is Elongation factor P, found in Desulfovibrio desulfuricans (strain ATCC 27774 / DSM 6949 / MB).